The chain runs to 152 residues: Cytochrome c-type biogenesis CcmH-like mitochondrial protein (152 aa).

Residues 1-83 are Mitochondrial intermembrane-facing; that stretch reads MATEEDVKQR…ILYTPKFDLQ (83 aa). Residues Cys26 and Cys29 each coordinate heme. A helical membrane pass occupies residues 84-104; the sequence is TAAIWLSPVIVGGVAAGVWAY. Residues 105–152 lie on the Mitochondrial matrix side of the membrane; sequence QKHRQRTNVHIMALNLVRGVPLTPREKETMLDVLTPPPPANKWWWPGK.

The protein belongs to the CcmH/CycL/Ccl2/NrfF family.

It is found in the mitochondrion inner membrane. Plays a role in mitochondrial cytochrome c maturation. Probable component of a heme lyase complex involved in the reduction of apocytochrome c. In Oryza sativa subsp. japonica (Rice), this protein is Cytochrome c-type biogenesis CcmH-like mitochondrial protein.